The chain runs to 169 residues: 2-C-methyl-D-erythritol 2,4-cyclodiphosphate synthase (169 aa).

2 residues coordinate a divalent metal cation: aspartate 13 and histidine 15. Residues 13-15 (DIH) and 40-41 (HS) each bind 4-CDP-2-C-methyl-D-erythritol 2-phosphate. An a divalent metal cation-binding site is contributed by histidine 48. 4-CDP-2-C-methyl-D-erythritol 2-phosphate-binding positions include 62–64 (DIG), 138–141 (TTNE), and arginine 148.

It belongs to the IspF family. Homotrimer. A divalent metal cation is required as a cofactor.

The catalysed reaction is 4-CDP-2-C-methyl-D-erythritol 2-phosphate = 2-C-methyl-D-erythritol 2,4-cyclic diphosphate + CMP. Its pathway is isoprenoid biosynthesis; isopentenyl diphosphate biosynthesis via DXP pathway; isopentenyl diphosphate from 1-deoxy-D-xylulose 5-phosphate: step 4/6. Its function is as follows. Involved in the biosynthesis of isopentenyl diphosphate (IPP) and dimethylallyl diphosphate (DMAPP), two major building blocks of isoprenoid compounds. Catalyzes the conversion of 4-diphosphocytidyl-2-C-methyl-D-erythritol 2-phosphate (CDP-ME2P) to 2-C-methyl-D-erythritol 2,4-cyclodiphosphate (ME-CPP) with a corresponding release of cytidine 5-monophosphate (CMP). This chain is 2-C-methyl-D-erythritol 2,4-cyclodiphosphate synthase, found in Akkermansia muciniphila (strain ATCC BAA-835 / DSM 22959 / JCM 33894 / BCRC 81048 / CCUG 64013 / CIP 107961 / Muc).